We begin with the raw amino-acid sequence, 735 residues long: Wall-associated receptor kinase 1 (735 aa).

A signal peptide spans 1 to 24 (MKVQEGLFLVAIFFSLACTQLVKG). Residues 25–331 (QHQPGENCQN…TTTMSCKRKE (307 aa)) lie on the Extracellular side of the membrane. N-linked (GlcNAc...) asparagine glycans are attached at residues Asn-38, Asn-56, Asn-80, Asn-90, Asn-113, Asn-140, Asn-209, Asn-235, and Asn-250. The interval 67 to 254 (RPHVLSDIEV…SICGGNSTCL (188 aa)) is polygalacturonic acid-binding. The 48-residue stretch at 234–281 (GNQTCEQVGSTSICGGNSTCLDSTPRNGYICRCNEGFDGNPYLSAGCQ) folds into the EGF-like 1 domain. 6 disulfide bridges follow: Cys-238–Cys-253, Cys-247–Cys-264, Cys-266–Cys-280, Cys-286–Cys-303, Cys-297–Cys-312, and Cys-314–Cys-327. One can recognise an EGF-like 2; calcium-binding domain in the interval 282 to 328 (DVNECTTSSTIHRHNCSDPKTCRNKVGGFYCKCQSGYRLDTTTMSCK). Asn-296 carries an N-linked (GlcNAc...) asparagine glycan. The helical transmembrane segment at 332 to 352 (FAWTTILLVTTIGFLVILLGV) threads the bilayer. Residues 353–735 (ACIQQRMKHL…VAILDIETGR (383 aa)) lie on the Cytoplasmic side of the membrane. A Phosphothreonine modification is found at Thr-398. Residues 409–692 (YAESRILGQG…RVEKTKHKWS (284 aa)) form the Protein kinase domain. ATP is bound by residues 415–423 (LGQGGQGTV) and Lys-437. Tyr-482 is subject to Phosphotyrosine. The active-site Proton acceptor is the Asp-534. Residues Thr-568 and Thr-573 each carry the phosphothreonine modification. Tyr-581 is subject to Phosphotyrosine.

The protein belongs to the protein kinase superfamily. Ser/Thr protein kinase family. Interacts with the glycine-rich proteins GRP3 and GRP3S, and the type 2C protein phosphatase KAPP. Component of a 500 kDa complex, composed of WAK1, GRP3 and KAPP. Interacts with the oxygen-evolving enhancer protein 2 (OEE2). As to expression, predominantly expressed in green tissues such as stems and leaves. Detected at organ junctions.

Its subcellular location is the membrane. The catalysed reaction is L-seryl-[protein] + ATP = O-phospho-L-seryl-[protein] + ADP + H(+). It catalyses the reaction L-threonyl-[protein] + ATP = O-phospho-L-threonyl-[protein] + ADP + H(+). In terms of biological role, serine/threonine-protein kinase that may function as a signaling receptor of extracellular matrix component. Binding to pectin may have significance in the control of cell expansion, morphogenesis and development. Required during plant's response to pathogen infection and in plant defense against heavy metal toxicity. Phosphorylates the oxygen-evolving enhancer protein 2 (OEE2) in an GRP-3-dependent manner. The chain is Wall-associated receptor kinase 1 (WAK1) from Arabidopsis thaliana (Mouse-ear cress).